Reading from the N-terminus, the 334-residue chain is NAD-dependent protein deacetylase sirtuin-3 (334 aa).

One can recognise a Deacetylase sirtuin-type domain in the interval 53-315 (SSEKKFSLQD…ERLVDLLGWT (263 aa)). Lys57 bears the N6-succinyllysine mark. NAD(+) contacts are provided by residues 80–100 (GAGI…SGLY) and 163–166 (QNID). His183 (proton acceptor) is an active-site residue. Residues Cys191, Cys194, Cys215, and Cys218 each coordinate Zn(2+). Residues 254–256 (GTS) and 279–281 (NRD) each bind NAD(+).

This sequence belongs to the sirtuin family. Class I subfamily. In terms of assembly, upon metabolic stress, forms a complex composed of FOXO3, SIRT3 and mitochondrial RNA polymerase POLRMT; the complex is recruited to mtDNA in a SIRT3-dependent manner. Also forms a complex composed of FOXO3, SIRT3, TFAM and POLRMT. Interacts with NDUFA9, ACSS1, IDH2 and GDH. Interacts with PCCA. It depends on Zn(2+) as a cofactor. Expressed in cardiomyocytes (at protein level). Expressed in the brain, liver, kidney and testes. Expressed in skeletal muscles (at protein level).

Its subcellular location is the mitochondrion matrix. It is found in the cytoplasm. The catalysed reaction is N(6)-acetyl-L-lysyl-[protein] + NAD(+) + H2O = 2''-O-acetyl-ADP-D-ribose + nicotinamide + L-lysyl-[protein]. It catalyses the reaction N(6)-[(S)-lactoyl]-L-lysyl-[protein] + NAD(+) + H2O = 2''-O-(S)-lactoyl-ADP-D-ribose + nicotinamide + L-lysyl-[protein]. NAD-dependent protein deacetylase. Activates or deactivates mitochondrial target proteins by deacetylating key lysine residues. Known targets include ACSS1, IDH, GDH, PDHA1, SOD2, LCAD, SDHA, MRPL12 and the ATP synthase subunit ATP5PO. Contributes to the regulation of the cellular energy metabolism. Important for regulating tissue-specific ATP levels. In response to metabolic stress, deacetylates transcription factor FOXO3 and recruits FOXO3 and mitochondrial RNA polymerase POLRMT to mtDNA to promote mtDNA transcription. Acts as a regulator of ceramide metabolism by mediating deacetylation of ceramide synthases CERS1, CERS2 and CERS6, thereby increasing their activity and promoting mitochondrial ceramide accumulation. Regulates hepatic lipogenesis. Uses NAD(+) substrate imported by SLC25A47, triggering downstream activation of PRKAA1/AMPK-alpha signaling cascade that ultimately downregulates sterol regulatory element-binding protein (SREBP) transcriptional activities and ATP-consuming lipogenesis to restore cellular energy balance. In addition to protein deacetylase activity, also acts as a protein-lysine deacylase by mediating delactylation of proteins, such as CCNE2 and 'Lys-16' of histone H4 (H4K16la). The protein is NAD-dependent protein deacetylase sirtuin-3 of Mus musculus (Mouse).